The chain runs to 438 residues: Methyl-coenzyme M reductase subunit beta (438 aa).

Tyrosine 367 is a coenzyme M binding site. A coenzyme B-binding site is contributed by glycine 369.

This sequence belongs to the methyl-coenzyme M reductase beta subunit family. MCR is a hexamer of two alpha, two beta, and two gamma chains, forming a dimer of heterotrimers. Coenzyme F430 is required as a cofactor.

It is found in the cytoplasm. It carries out the reaction coenzyme B + methyl-coenzyme M = methane + coenzyme M-coenzyme B heterodisulfide. It functions in the pathway one-carbon metabolism; methyl-coenzyme M reduction; methane from methyl-coenzyme M: step 1/1. In terms of biological role, component of the methyl-coenzyme M reductase (MCR) I that catalyzes the reductive cleavage of methyl-coenzyme M (CoM-S-CH3 or 2-(methylthio)ethanesulfonate) using coenzyme B (CoB or 7-mercaptoheptanoylthreonine phosphate) as reductant which results in the production of methane and the mixed heterodisulfide of CoB and CoM (CoM-S-S-CoB). This is the final step in methanogenesis. The protein is Methyl-coenzyme M reductase subunit beta (mcrB) of Methanothermus fervidus.